The chain runs to 191 residues: Probable GTP-binding protein EngB (191 aa).

Residues 22 to 190 enclose the EngB-type G domain; it reads RLPEIAFLGR…WQAITTTLQA (169 aa). GTP contacts are provided by residues 30–37, 57–61, 75–78, 142–145, and 169–171; these read GRSNVGKS, GRTQT, DLPG, TKTD, and FSA. The Mg(2+) site is built by serine 37 and threonine 59.

The protein belongs to the TRAFAC class TrmE-Era-EngA-EngB-Septin-like GTPase superfamily. EngB GTPase family. It depends on Mg(2+) as a cofactor.

Necessary for normal cell division and for the maintenance of normal septation. This is Probable GTP-binding protein EngB from Solibacter usitatus (strain Ellin6076).